The primary structure comprises 1032 residues: Chitin synthase 8 (1032 aa).

Composition is skewed to pro residues over residues 1-11 and 26-41; these read MRPGDIYPPPQ and PPQP…PPQQ. The segment at 1–220 is disordered; sequence MRPGDIYPPP…DDDMNDSHPL (220 aa). 3 stretches are compositionally biased toward polar residues: residues 65–78, 98–107, and 143–160; these read MSPT…SRYN, LPTQSLSPFN, and TNPS…SYSY. N-linked (GlcNAc...) asparagine glycosylation occurs at asparagine 78. Low complexity predominate over residues 176–188; the sequence is PHHSSQSSVSSIP. Residues asparagine 215, asparagine 304, asparagine 473, asparagine 545, and asparagine 691 are each glycosylated (N-linked (GlcNAc...) asparagine). The next 7 helical transmembrane spans lie at 728-748, 762-782, 796-816, 842-862, 870-890, 972-992, and 995-1015; these read TLNM…FFVL, VNIP…LLSL, SMVG…FLAV, IVIS…MALE, FFQY…YAFC, VLLV…QASG, and NSLA…LAFF.

It belongs to the chitin synthase family.

Its subcellular location is the cell membrane. It catalyses the reaction [(1-&gt;4)-N-acetyl-beta-D-glucosaminyl](n) + UDP-N-acetyl-alpha-D-glucosamine = [(1-&gt;4)-N-acetyl-beta-D-glucosaminyl](n+1) + UDP + H(+). In terms of biological role, polymerizes chitin, a structural polymer of the cell wall and septum, by transferring the sugar moiety of UDP-GlcNAc to the non-reducing end of the growing chitin polymer. The chain is Chitin synthase 8 from Cryptococcus neoformans var. grubii serotype A (strain H99 / ATCC 208821 / CBS 10515 / FGSC 9487) (Filobasidiella neoformans var. grubii).